Here is a 458-residue protein sequence, read N- to C-terminus: tRNA modification GTPase MnmE (458 aa).

Arginine 26, glutamate 88, and arginine 127 together coordinate (6S)-5-formyl-5,6,7,8-tetrahydrofolate. In terms of domain architecture, TrmE-type G spans 224-378; that stretch reads GLSTAIIGRP…IEDRINQLFF (155 aa). Asparagine 234 provides a ligand contact to K(+). Residues 234-239, 253-259, and 278-281 each bind GTP; these read NVGKSS, TDIAGTT, and DTAG. Residue serine 238 coordinates Mg(2+). The K(+) site is built by threonine 253, isoleucine 255, and threonine 258. Threonine 259 serves as a coordination point for Mg(2+). (6S)-5-formyl-5,6,7,8-tetrahydrofolate is bound at residue lysine 458.

Belongs to the TRAFAC class TrmE-Era-EngA-EngB-Septin-like GTPase superfamily. TrmE GTPase family. In terms of assembly, homodimer. Heterotetramer of two MnmE and two MnmG subunits. Requires K(+) as cofactor.

It localises to the cytoplasm. In terms of biological role, exhibits a very high intrinsic GTPase hydrolysis rate. Involved in the addition of a carboxymethylaminomethyl (cmnm) group at the wobble position (U34) of certain tRNAs, forming tRNA-cmnm(5)s(2)U34. This is tRNA modification GTPase MnmE from Streptococcus pyogenes serotype M28 (strain MGAS6180).